A 471-amino-acid polypeptide reads, in one-letter code: Ribulose bisphosphate carboxylase large chain 2 (471 aa).

Residues asparagine 116 and threonine 166 each coordinate substrate. Lysine 168 functions as the Proton acceptor in the catalytic mechanism. Residue lysine 170 participates in substrate binding. Mg(2+) is bound by residues lysine 194, aspartate 196, and glutamate 197. Lysine 194 is subject to N6-carboxylysine. Histidine 287 serves as the catalytic Proton acceptor. 3 residues coordinate substrate: arginine 288, histidine 320, and serine 372.

The protein belongs to the RuBisCO large chain family. Type I subfamily. Heterohexadecamer of 8 large chains and 8 small chains. Forms a CsoS2-CsoS1-RuBisCO complex. Mg(2+) serves as cofactor.

It localises to the carboxysome. It carries out the reaction 2 (2R)-3-phosphoglycerate + 2 H(+) = D-ribulose 1,5-bisphosphate + CO2 + H2O. The catalysed reaction is D-ribulose 1,5-bisphosphate + O2 = 2-phosphoglycolate + (2R)-3-phosphoglycerate + 2 H(+). In terms of biological role, ruBisCO catalyzes two reactions: the carboxylation of D-ribulose 1,5-bisphosphate, the primary event in carbon dioxide fixation, as well as the oxidative fragmentation of the pentose substrate. Both reactions occur simultaneously and in competition at the same active site. Replacing the endogenous type I ccbLS genes in H.neapolitanus with this carboxysomally targeted enzyme reconstitutes RuBisCO with about 25% of normal activity; the active enzyme is targeted to carboxysomes. This is Ribulose bisphosphate carboxylase large chain 2 from Hydrogenovibrio crunogenus (strain DSM 25203 / XCL-2) (Thiomicrospira crunogena).